We begin with the raw amino-acid sequence, 218 residues long: ATP phosphoribosyltransferase (218 aa).

The protein belongs to the ATP phosphoribosyltransferase family. Short subfamily. Heteromultimer composed of HisG and HisZ subunits.

The protein localises to the cytoplasm. The enzyme catalyses 1-(5-phospho-beta-D-ribosyl)-ATP + diphosphate = 5-phospho-alpha-D-ribose 1-diphosphate + ATP. It functions in the pathway amino-acid biosynthesis; L-histidine biosynthesis; L-histidine from 5-phospho-alpha-D-ribose 1-diphosphate: step 1/9. Functionally, catalyzes the condensation of ATP and 5-phosphoribose 1-diphosphate to form N'-(5'-phosphoribosyl)-ATP (PR-ATP). Has a crucial role in the pathway because the rate of histidine biosynthesis seems to be controlled primarily by regulation of HisG enzymatic activity. In Synechococcus elongatus (strain ATCC 33912 / PCC 7942 / FACHB-805) (Anacystis nidulans R2), this protein is ATP phosphoribosyltransferase.